Here is a 609-residue protein sequence, read N- to C-terminus: UvrABC system protein C (609 aa).

The GIY-YIG domain maps to 19–97 (ASPGCYLWKS…IKKHNPRFNV (79 aa)). Residues 208 to 243 (ESLVSDLNIKMSNASERLDFEKAARYRDMLQRIQNF) form the UVR domain.

Belongs to the UvrC family. As to quaternary structure, interacts with UvrB in an incision complex.

It localises to the cytoplasm. Its function is as follows. The UvrABC repair system catalyzes the recognition and processing of DNA lesions. UvrC both incises the 5' and 3' sides of the lesion. The N-terminal half is responsible for the 3' incision and the C-terminal half is responsible for the 5' incision. The protein is UvrABC system protein C of Leptospira interrogans serogroup Icterohaemorrhagiae serovar Lai (strain 56601).